A 248-amino-acid polypeptide reads, in one-letter code: HTH-type transcriptional regulator GgaR (248 aa).

One can recognise an HTH gntR-type domain in the interval 22–90; sequence TPLYIKFAET…RGYGTQINNI (69 aa). A DNA-binding region (H-T-H motif) is located at residues 50–69; sequence ERDLSQLTGVSRITVRKAMQ.

Senses ADP-glucose (ADPG), which is the substrate for glycogen elongation, as an effector. In the presence of ADPG, GgaR becomes inactive and derepresses the yegTUV operon, leading to glycogen accumulation. In contrast, in the absence of glucose, the concentration of ADPG decreases, GgaR becomes active, and glycogen accumulation is repressed. Functionally, transcriptional regulator that regulates glycogen accumulation in response to the amount of glucose available to the cell. Acts as a repressor of the yegTUV operon, which may be involved in glycogen accumulation. This chain is HTH-type transcriptional regulator GgaR, found in Escherichia coli O6:H1 (strain CFT073 / ATCC 700928 / UPEC).